The sequence spans 325 residues: tRNA dimethylallyltransferase (325 aa).

G16–T23 contributes to the ATP binding site. Residue T18–T23 coordinates substrate. Interaction with substrate tRNA regions lie at residues D41–L44, Q165–R169, R253–R258, and K286–R293.

This sequence belongs to the IPP transferase family. In terms of assembly, monomer. Mg(2+) serves as cofactor.

The catalysed reaction is adenosine(37) in tRNA + dimethylallyl diphosphate = N(6)-dimethylallyladenosine(37) in tRNA + diphosphate. Catalyzes the transfer of a dimethylallyl group onto the adenine at position 37 in tRNAs that read codons beginning with uridine, leading to the formation of N6-(dimethylallyl)adenosine (i(6)A). This Ralstonia pickettii (strain 12J) protein is tRNA dimethylallyltransferase.